The following is a 544-amino-acid chain: MTMGDSDLRKPTNFGTGHLSRRRSWCCSFAVPPASPDTRSISSRNHIPAKSQQQRPKLVPCSPQSSKSALNIVNRIDPRRILSPGRVSPIDSDPTVTTMQETETTQEEEDDAVVVDSTPNLRSESFRAPKIEVTGSGLSEGYDARLSLKGRNGGGVLVLELSLEVLAANSDVFSGLIAEEKKCSSSSSSLGLKNTCRIEVCDVENLGVFRETVELMFEESNVIIKKFMTMGVYRAIDVLEVAAGIKFSRAVLSCLKYLEAVPWTEDEEEKLRRLLGIYSFDDDAVSEILARFNSNETENLQDSLSKKLVWSITSCSDVNPRNELKSLVKGLLCKSSVYEKEQPEINKEDIYRAGKCCVDSLAKLFEEGSSSSSSKKEKPLIESISREVENINWLLEIMIDREIAEEFVEIWGKQRRLVEMHERVSPMVRYEVSRVTGAIFIAMGKRRVQCGGEARAGLVEAWFKPMLVDFGWLQRCKKGLDMREVEEGMGQTLLTLPVKEQYQVFMEWFRWFSKHGTECPNLSKAFQIWWRRSFLRGVESSTCR.

2 disordered regions span residues 34-66 (ASPD…PQSS) and 82-111 (LSPG…EEDD). A compositionally biased stretch (polar residues) spans 37 to 55 (DTRSISSRNHIPAKSQQQR). Residues 93–103 (DPTVTTMQETE) are compositionally biased toward low complexity. Residues 142-225 (YDARLSLKGR…MFEESNVIIK (84 aa)) enclose the BTB domain.

Its pathway is protein modification; protein ubiquitination. Functionally, may act as a substrate-specific adapter of an E3 ubiquitin-protein ligase complex (CUL3-RBX1-BTB) which mediates the ubiquitination and subsequent proteasomal degradation of target proteins. The sequence is that of BTB/POZ domain-containing protein At2g13690 (PRL1-IFG) from Arabidopsis thaliana (Mouse-ear cress).